A 635-amino-acid chain; its full sequence is Threonine--tRNA ligase (635 aa).

The TGS domain maps to 1-61 (MINISLSDGS…ENNCKLRILT (61 aa)). A catalytic region spans residues 242 to 533 (DHRKLGRELD…LIEEYAGCFP (292 aa)). Zn(2+) is bound by residues cysteine 333, histidine 384, and histidine 510.

It belongs to the class-II aminoacyl-tRNA synthetase family. In terms of assembly, homodimer. The cofactor is Zn(2+).

The protein resides in the cytoplasm. It catalyses the reaction tRNA(Thr) + L-threonine + ATP = L-threonyl-tRNA(Thr) + AMP + diphosphate + H(+). In terms of biological role, catalyzes the attachment of threonine to tRNA(Thr) in a two-step reaction: L-threonine is first activated by ATP to form Thr-AMP and then transferred to the acceptor end of tRNA(Thr). Also edits incorrectly charged L-seryl-tRNA(Thr). This is Threonine--tRNA ligase from Rickettsia canadensis (strain McKiel).